Here is a 944-residue protein sequence, read N- to C-terminus: 2-oxoglutarate dehydrogenase E1 component (944 aa).

The disordered stretch occupies residues 914–944 (RRRRSSPAEGDPTVHKKEQERIVSDSLTRKN). Residues 925–936 (PTVHKKEQERIV) show a composition bias toward basic and acidic residues.

Belongs to the alpha-ketoglutarate dehydrogenase family. In terms of assembly, homodimer. Part of the 2-oxoglutarate dehydrogenase (OGDH) complex composed of E1 (2-oxoglutarate dehydrogenase), E2 (dihydrolipoamide succinyltransferase) and E3 (dihydrolipoamide dehydrogenase); the complex contains multiple copies of the three enzymatic components (E1, E2 and E3). Thiamine diphosphate is required as a cofactor.

The enzyme catalyses N(6)-[(R)-lipoyl]-L-lysyl-[protein] + 2-oxoglutarate + H(+) = N(6)-[(R)-S(8)-succinyldihydrolipoyl]-L-lysyl-[protein] + CO2. E1 component of the 2-oxoglutarate dehydrogenase (OGDH) complex which catalyzes the decarboxylation of 2-oxoglutarate, the first step in the conversion of 2-oxoglutarate to succinyl-CoA and CO(2). The chain is 2-oxoglutarate dehydrogenase E1 component from Bacillus subtilis (strain 168).